A 62-amino-acid chain; its full sequence is MAQVCDMCGKGPQFGNNISHAHNVTKRRWNVNLRPVRAKVNGATKRMRVCTTCLRSGKLVKA.

This sequence belongs to the bacterial ribosomal protein bL28 family.

The sequence is that of Large ribosomal subunit protein bL28 from Koribacter versatilis (strain Ellin345).